The sequence spans 256 residues: Deoxyribose-phosphate aldolase (256 aa).

Aspartate 102 (proton donor/acceptor) is an active-site residue. The Schiff-base intermediate with acetaldehyde role is filled by lysine 165. Residue lysine 197 is the Proton donor/acceptor of the active site.

Belongs to the DeoC/FbaB aldolase family. DeoC type 2 subfamily.

The protein localises to the cytoplasm. It carries out the reaction 2-deoxy-D-ribose 5-phosphate = D-glyceraldehyde 3-phosphate + acetaldehyde. It functions in the pathway carbohydrate degradation; 2-deoxy-D-ribose 1-phosphate degradation; D-glyceraldehyde 3-phosphate and acetaldehyde from 2-deoxy-alpha-D-ribose 1-phosphate: step 2/2. Functionally, catalyzes a reversible aldol reaction between acetaldehyde and D-glyceraldehyde 3-phosphate to generate 2-deoxy-D-ribose 5-phosphate. The chain is Deoxyribose-phosphate aldolase from Shewanella sp. (strain MR-7).